A 220-amino-acid polypeptide reads, in one-letter code: Small ribosomal subunit protein uS5 (220 aa).

Residues 1–39 (MAEQPAGQAGTTDNRDARGDREGRRRDSGRGSRERDGEK) are disordered. Over residues 13 to 39 (DNRDARGDREGRRRDSGRGSRERDGEK) the composition is skewed to basic and acidic residues. Residues 42–105 (YLERVVAINR…EEARKSFFRV (64 aa)) enclose the S5 DRBM domain.

Belongs to the universal ribosomal protein uS5 family. In terms of assembly, part of the 30S ribosomal subunit. Contacts proteins S4 and S8.

Its function is as follows. With S4 and S12 plays an important role in translational accuracy. In terms of biological role, located at the back of the 30S subunit body where it stabilizes the conformation of the head with respect to the body. This Mycobacterium bovis (strain ATCC BAA-935 / AF2122/97) protein is Small ribosomal subunit protein uS5.